We begin with the raw amino-acid sequence, 356 residues long: Phosphatidylglycerol--prolipoprotein diacylglyceryl transferase (356 aa).

4 consecutive transmembrane segments (helical) span residues 24-44 (IKWY…LACV), 59-79 (WFVF…SFII), 103-123 (LAIE…FPLV), and 144-164 (VSMW…QIIG). Position 165 (Arg-165) interacts with a 1,2-diacyl-sn-glycero-3-phospho-(1'-sn-glycerol). A run of 2 helical transmembrane segments spans residues 209–229 (PFFL…YIGG) and 265–285 (FATS…LLVC).

This sequence belongs to the Lgt family.

It localises to the cell membrane. The enzyme catalyses L-cysteinyl-[prolipoprotein] + a 1,2-diacyl-sn-glycero-3-phospho-(1'-sn-glycerol) = an S-1,2-diacyl-sn-glyceryl-L-cysteinyl-[prolipoprotein] + sn-glycerol 1-phosphate + H(+). The protein operates within protein modification; lipoprotein biosynthesis (diacylglyceryl transfer). In terms of biological role, catalyzes the transfer of the diacylglyceryl group from phosphatidylglycerol to the sulfhydryl group of the N-terminal cysteine of a prolipoprotein, the first step in the formation of mature lipoproteins. This is Phosphatidylglycerol--prolipoprotein diacylglyceryl transferase from Malacoplasma penetrans (strain HF-2) (Mycoplasma penetrans).